A 421-amino-acid chain; its full sequence is 3-isopropylmalate dehydratase large subunit (421 aa).

The [4Fe-4S] cluster site is built by C300, C360, and C363.

It belongs to the aconitase/IPM isomerase family. LeuC type 2 subfamily. As to quaternary structure, heterodimer of LeuC and LeuD. Requires [4Fe-4S] cluster as cofactor.

It carries out the reaction (2R,3S)-3-isopropylmalate = (2S)-2-isopropylmalate. The protein operates within amino-acid biosynthesis; L-leucine biosynthesis; L-leucine from 3-methyl-2-oxobutanoate: step 2/4. Catalyzes the isomerization between 2-isopropylmalate and 3-isopropylmalate, via the formation of 2-isopropylmaleate. The sequence is that of 3-isopropylmalate dehydratase large subunit from Moorella thermoacetica (strain ATCC 39073 / JCM 9320).